Here is a 421-residue protein sequence, read N- to C-terminus: Serine hydroxymethyltransferase (421 aa).

Residues Leu-123 and 127-129 (GHL) each bind (6S)-5,6,7,8-tetrahydrofolate. The residue at position 232 (Lys-232) is an N6-(pyridoxal phosphate)lysine.

Belongs to the SHMT family. In terms of assembly, homodimer. Requires pyridoxal 5'-phosphate as cofactor.

The protein localises to the cytoplasm. The enzyme catalyses (6R)-5,10-methylene-5,6,7,8-tetrahydrofolate + glycine + H2O = (6S)-5,6,7,8-tetrahydrofolate + L-serine. Its pathway is one-carbon metabolism; tetrahydrofolate interconversion. It functions in the pathway amino-acid biosynthesis; glycine biosynthesis; glycine from L-serine: step 1/1. Functionally, catalyzes the reversible interconversion of serine and glycine with tetrahydrofolate (THF) serving as the one-carbon carrier. This reaction serves as the major source of one-carbon groups required for the biosynthesis of purines, thymidylate, methionine, and other important biomolecules. Also exhibits THF-independent aldolase activity toward beta-hydroxyamino acids, producing glycine and aldehydes, via a retro-aldol mechanism. The chain is Serine hydroxymethyltransferase from Ehrlichia ruminantium (strain Gardel).